The primary structure comprises 258 residues: Snake venom serine protease (258 aa).

The signal sequence occupies residues 1–18 (MVLIRVLANLLILQLSYA). The propeptide occupies 19-24 (QKSSEL). One can recognise a Peptidase S1 domain in the interval 25–249 (VIGGDECNIN…YTEWIQSILA (225 aa)). Intrachain disulfides connect Cys31–Cys163, Cys50–Cys66, Cys98–Cys256, Cys142–Cys210, Cys174–Cys189, and Cys200–Cys225. Active-site charge relay system residues include His65 and Asp110. A glycan (N-linked (GlcNAc...) asparagine) is linked at Asn154. Ser204 (charge relay system) is an active-site residue.

This sequence belongs to the peptidase S1 family. Snake venom subfamily. Monomer. As to expression, expressed by the venom gland.

Its subcellular location is the secreted. Its function is as follows. Snake venom serine protease that may act in the hemostasis system of the prey. In Lachesis stenophrys (Central American bushmaster), this protein is Snake venom serine protease.